The following is a 1032-amino-acid chain: Putative oxidoreductase YgfK (1032 aa).

Residues 928–958 (RFQTLHLDAYCNECGNCAQFCPWNGKPYKDK) form the 4Fe-4S ferredoxin-type domain. [4Fe-4S] cluster is bound by residues Cys938, Cys941, Cys944, and Cys948.

It depends on [4Fe-4S] cluster as a cofactor.

In terms of biological role, could be an iron-sulfur flavoprotein with NADPH:O(2) oxidoreductase activity. In Escherichia coli (strain K12), this protein is Putative oxidoreductase YgfK (ygfK).